The chain runs to 194 residues: Imidazoleglycerol-phosphate dehydratase (194 aa).

It belongs to the imidazoleglycerol-phosphate dehydratase family.

It localises to the cytoplasm. It catalyses the reaction D-erythro-1-(imidazol-4-yl)glycerol 3-phosphate = 3-(imidazol-4-yl)-2-oxopropyl phosphate + H2O. Its pathway is amino-acid biosynthesis; L-histidine biosynthesis; L-histidine from 5-phospho-alpha-D-ribose 1-diphosphate: step 6/9. The polypeptide is Imidazoleglycerol-phosphate dehydratase (Limosilactobacillus fermentum (strain NBRC 3956 / LMG 18251) (Lactobacillus fermentum)).